The sequence spans 107 residues: Bombesin (107 aa).

A signal peptide spans 1–26; sequence MSAIPLNRILPLGFLLIFSFISLSSC. A propeptide spanning residues 27–41 is cleaved from the precursor; sequence MEFVEDPNNQGGLNL. Position 42 is a pyrrolidone carboxylic acid (Gln42). A Methionine amide modification is found at Met55. The propeptide occupies 56 to 107; the sequence is GKKSLQDTDFEEMESFAKRNVENMKAESERELRHAQLVVRNILEQYLKNMQN.

In terms of tissue distribution, expressed by the skin glands.

It localises to the secreted. Stimulates smooth muscle contraction. Role in induction of hypothermia, stimulation of DNA replication and release of many gastrointestinal hormones. Possesses insulin-releasing activity. The sequence is that of Bombesin from Bombina variegata (Yellow-bellied toad).